The sequence spans 780 residues: Striatin (780 aa).

A coiled-coil region spans residues 53-120 (LHFLQHEWAR…QERAKYHKLK (68 aa)). Residues 55-63 (FLQHEWARF) are caveolin-binding. A disordered region spans residues 123–150 (TELNQGDMKPPSYDSDEGNETEVQPQQN). The residue at position 137 (Ser-137) is a Phosphoserine. Residues 149-166 (QNSQLMWKQGRQLLRQYL) form a calmodulin-binding region. At Thr-225 the chain carries Phosphothreonine. Residues Ser-227, Ser-229, Ser-245, and Ser-259 each carry the phosphoserine modification. Disordered regions lie at residues 289–312 (DFLVTSEEGDNESRSAGDGTDWEK), 334–353 (EQYKKERKGKKGVKRPNRSK), and 364–392 (VDELPSLQPSVGSPSRPSSSRLPEQELSR). Residues 299-312 (NESRSAGDGTDWEK) are compositionally biased toward basic and acidic residues. Basic residues predominate over residues 338-351 (KERKGKKGVKRPNR). WD repeat units follow at residues 461 to 500 (SHFDGIRALAFHPIEPVLITASEDHTLKMWNLQKTAPAKK), 514 to 553 (AHKGPVLCVVMSSNGEQCYSGGTDGRIQSWSTTNPNVDPY), 567 to 606 (GHTDAVWGLAYSAAHQRLLSCSADGTLRLWNTTEVAPALS), 662 to 701 (SSSCQINRVISHPTLPISITAHEDRHIKFYDNNTGKLIHS), 704 to 743 (AHLEAVTSLAVDPNGLYLMSGSHDCSIRLWNLESKTCIQE), and 750 to 780 (KFEESIHDVAFHPSKCYIASAGADALAKVFV).

This sequence belongs to the WD repeat striatin family. In terms of assembly, part of the core of STRIPAK complexes composed of PP2A catalytic and scaffolding subunits, the striatins (PP2A regulatory subunits), the striatin-associated proteins MOB4, STRIP1 and STRIP2, PDCD10 and members of the STE20 kinases, such as STK24 and STK26. Interacts with CTTNBP2; this interaction may regulate dendritic spine distribution of STRN. Activation of glutamate receptors weakens the interaction with CTTNBP2. In terms of tissue distribution, mainly expressed in brain but is also expressed at low levels in various tissues such as kidney, spleen, skeletal muscle and lung.

It is found in the cytoplasm. Its subcellular location is the membrane. The protein localises to the cell projection. The protein resides in the dendritic spine. Its function is as follows. Calmodulin-binding scaffolding protein which is the center of the striatin-interacting phosphatase and kinase (STRIPAK) complexes. STRIPAK complexes have critical roles in protein (de)phosphorylation and are regulators of multiple signaling pathways including Hippo, MAPK, nuclear receptor and cytoskeleton remodeling. Different types of STRIPAK complexes are involved in a variety of biological processes such as cell growth, differentiation, apoptosis, metabolism and immune regulation. The sequence is that of Striatin (Strn) from Mus musculus (Mouse).